A 384-amino-acid chain; its full sequence is Deoxyguanosinetriphosphate triphosphohydrolase-like protein (384 aa).

An HD domain is found at 62-198 (RLTHSLEVST…AALADDISYI (137 aa)).

Belongs to the dGTPase family. Type 2 subfamily.

This Rickettsia conorii (strain ATCC VR-613 / Malish 7) protein is Deoxyguanosinetriphosphate triphosphohydrolase-like protein.